A 67-amino-acid chain; its full sequence is MPQLDTTTWFITILSMLITLFILFQTKLLNYTYPLNALPISPNVTNHLTPWKMKWTKTYLPLSLPLQ.

A helical membrane pass occupies residues Thr-8 to Phe-24. Lys-54 is subject to N6-acetyllysine; alternate. At Lys-54 the chain carries N6-succinyllysine; alternate. Lys-57 is subject to N6-acetyllysine.

It belongs to the ATPase protein 8 family. As to quaternary structure, component of the ATP synthase complex composed at least of ATP5F1A/subunit alpha, ATP5F1B/subunit beta, ATP5MC1/subunit c (homooctomer), MT-ATP6/subunit a, MT-ATP8/subunit 8, ATP5ME/subunit e, ATP5MF/subunit f, ATP5MG/subunit g, ATP5MK/subunit k, ATP5MJ/subunit j, ATP5F1C/subunit gamma, ATP5F1D/subunit delta, ATP5F1E/subunit epsilon, ATP5PF/subunit F6, ATP5PB/subunit b, ATP5PD/subunit d, ATP5PO/subunit OSCP. ATP synthase complex consists of a soluble F(1) head domain (subunits alpha(3) and beta(3)) - the catalytic core - and a membrane F(0) domain - the membrane proton channel (subunits c, a, 8, e, f, g, k and j). These two domains are linked by a central stalk (subunits gamma, delta, and epsilon) rotating inside the F1 region and a stationary peripheral stalk (subunits F6, b, d, and OSCP). Interacts with PRICKLE3.

It localises to the mitochondrion membrane. Its function is as follows. Subunit 8, of the mitochondrial membrane ATP synthase complex (F(1)F(0) ATP synthase or Complex V) that produces ATP from ADP in the presence of a proton gradient across the membrane which is generated by electron transport complexes of the respiratory chain. ATP synthase complex consist of a soluble F(1) head domain - the catalytic core - and a membrane F(1) domain - the membrane proton channel. These two domains are linked by a central stalk rotating inside the F(1) region and a stationary peripheral stalk. During catalysis, ATP synthesis in the catalytic domain of F(1) is coupled via a rotary mechanism of the central stalk subunits to proton translocation. In vivo, can only synthesize ATP although its ATP hydrolase activity can be activated artificially in vitro. Part of the complex F(0) domain. This is ATP synthase F(0) complex subunit 8 from Dugong dugon (Dugong).